The following is an 89-amino-acid chain: Small ribosomal subunit protein uS14A (89 aa).

The protein belongs to the universal ribosomal protein uS14 family. As to quaternary structure, part of the 30S ribosomal subunit. Contacts proteins S3 and S10.

Its function is as follows. Binds 16S rRNA, required for the assembly of 30S particles and may also be responsible for determining the conformation of the 16S rRNA at the A site. The chain is Small ribosomal subunit protein uS14A from Listeria monocytogenes serotype 4b (strain F2365).